The chain runs to 338 residues: MAPTKVGINGFGRIGRIVFRNAIEHDDIDIVAVNDPFIETEYAAYMLKYDSTHGQFKGDIKVLSDGLEVNGKKVKFYTERDPANIPWAESEAYYVVESTGVFTTTEKAKAHLKGGAKKVVISAPSADAPMYVMGVNNETYNGEADVISNASCTTNCLAPLAKVINDEFTIIESLMTTIHSYTATQKTVDGPSAKDWRGGRTAAQNIIPSSTGAAKAVGKVIPELNGKLTGMSMRVPTATVSVVDLTVRIEKAASYDEIKEVIKKAANGPLKGILAYTEDDVVSTDMNGDNHSSIFDAKAGISLNKNFVKLVSWYDNEWGYSRRVLDLLHYISKVDNKQ.

NAD(+) contacts are provided by residues 13-14, aspartate 35, and arginine 80; that span reads RI. D-glyceraldehyde 3-phosphate is bound by residues 151-153, threonine 182, 211-212, and arginine 234; these read SCT and TG. Cysteine 152 functions as the Nucleophile in the catalytic mechanism. Position 316 (asparagine 316) interacts with NAD(+).

It belongs to the glyceraldehyde-3-phosphate dehydrogenase family. In terms of assembly, homotetramer.

It is found in the cytoplasm. The catalysed reaction is D-glyceraldehyde 3-phosphate + phosphate + NAD(+) = (2R)-3-phospho-glyceroyl phosphate + NADH + H(+). It functions in the pathway carbohydrate degradation; glycolysis; pyruvate from D-glyceraldehyde 3-phosphate: step 1/5. This is Glyceraldehyde-3-phosphate dehydrogenase (GPD) from Sclerotinia sclerotiorum (White mold).